The chain runs to 418 residues: tRNA-2-methylthio-N(6)-dimethylallyladenosine synthase (418 aa).

Residues 2–118 (PGYYLWTIGC…WGEIPEGFIL (117 aa)) enclose the MTTase N-terminal domain. Positions 11, 47, 81, 134, 138, and 141 each coordinate [4Fe-4S] cluster. The Radical SAM core domain occupies 120–352 (LKPPVSASIT…DLQKETVSKA (233 aa)). Residues 354 to 414 (SALVDTFAEV…PWSLQAKLVK (61 aa)) enclose the TRAM domain.

It belongs to the methylthiotransferase family. MiaB subfamily. In terms of assembly, monomer. [4Fe-4S] cluster serves as cofactor.

The protein resides in the cytoplasm. It catalyses the reaction N(6)-dimethylallyladenosine(37) in tRNA + (sulfur carrier)-SH + AH2 + 2 S-adenosyl-L-methionine = 2-methylsulfanyl-N(6)-dimethylallyladenosine(37) in tRNA + (sulfur carrier)-H + 5'-deoxyadenosine + L-methionine + A + S-adenosyl-L-homocysteine + 2 H(+). Catalyzes the methylthiolation of N6-(dimethylallyl)adenosine (i(6)A), leading to the formation of 2-methylthio-N6-(dimethylallyl)adenosine (ms(2)i(6)A) at position 37 in tRNAs that read codons beginning with uridine. The protein is tRNA-2-methylthio-N(6)-dimethylallyladenosine synthase of Dehalococcoides mccartyi (strain ATCC BAA-2266 / KCTC 15142 / 195) (Dehalococcoides ethenogenes (strain 195)).